The following is a 305-amino-acid chain: Coenzyme PQQ synthesis protein B (305 aa).

It belongs to the PqqB family.

It functions in the pathway cofactor biosynthesis; pyrroloquinoline quinone biosynthesis. Functionally, may be involved in the transport of PQQ or its precursor to the periplasm. The chain is Coenzyme PQQ synthesis protein B from Methylobacillus flagellatus (strain ATCC 51484 / DSM 6875 / VKM B-1610 / KT).